A 149-amino-acid polypeptide reads, in one-letter code: MRMNKQIVVTDWIKEKPRLGSFLKLTLTSDERKILRGKRLTDCDQEIILQLPRNGKLNDGDILSTNESNFYVEIIAKTEDLIEISSNSKNELIKTAYHLGNRHVEVEIEEDILLTKSDYVIENMLKNFKVDIVNTQKKFSPEKGAHSHD.

This sequence belongs to the UreE family.

It localises to the cytoplasm. In terms of biological role, involved in urease metallocenter assembly. Binds nickel. Probably functions as a nickel donor during metallocenter assembly. This Prochlorococcus marinus (strain MIT 9312) protein is Urease accessory protein UreE.